The sequence spans 364 residues: S-adenosylmethionine:tRNA ribosyltransferase-isomerase (364 aa).

Belongs to the QueA family. In terms of assembly, monomer.

It localises to the cytoplasm. It catalyses the reaction 7-aminomethyl-7-carbaguanosine(34) in tRNA + S-adenosyl-L-methionine = epoxyqueuosine(34) in tRNA + adenine + L-methionine + 2 H(+). The protein operates within tRNA modification; tRNA-queuosine biosynthesis. Its function is as follows. Transfers and isomerizes the ribose moiety from AdoMet to the 7-aminomethyl group of 7-deazaguanine (preQ1-tRNA) to give epoxyqueuosine (oQ-tRNA). The chain is S-adenosylmethionine:tRNA ribosyltransferase-isomerase from Bradyrhizobium sp. (strain ORS 278).